The following is a 102-amino-acid chain: Acid shock protein (102 aa).

Residues 1–21 form the signal peptide; sequence MKKVLALVVAAAMGLSSAAFA. The span at 22-41 shows a compositional bias: low complexity; sequence AETATTPAPTATTTKAAPAK. The propeptide occupies 22–58; that stretch reads AETATTPAPTATTTKAAPAKTTHHKKQHKAAPAQKAQ. Residues 22–102 are disordered; that stretch reads AETATTPAPT…PAKPAAQPAA (81 aa). The segment covering 80 to 90 has biased composition (basic residues); that stretch reads AAKKHAGKHGH. Residues 91 to 102 are compositionally biased toward low complexity; sequence QQPAKPAAQPAA.

Belongs to the Asr family. Post-translationally, proteolytic processing gives rise to the active protein.

It is found in the periplasm. Its function is as follows. Required for growth and/or survival at acidic conditions. The polypeptide is Acid shock protein (Shigella flexneri).